The sequence spans 305 residues: Ornithine carbamoyltransferase (305 aa).

Carbamoyl phosphate contacts are provided by residues 48–51, Arg99, and 126–129; these read STRT and HPCQ. L-ornithine is bound by residues Asn157, Asp222, and 226-227; that span reads SM. Residues 262-263 and Arg290 each bind carbamoyl phosphate; that span reads CL.

This sequence belongs to the aspartate/ornithine carbamoyltransferase superfamily. OTCase family.

The protein localises to the cytoplasm. The catalysed reaction is carbamoyl phosphate + L-ornithine = L-citrulline + phosphate + H(+). Its pathway is amino-acid biosynthesis; L-arginine biosynthesis; L-arginine from L-ornithine and carbamoyl phosphate: step 1/3. Reversibly catalyzes the transfer of the carbamoyl group from carbamoyl phosphate (CP) to the N(epsilon) atom of ornithine (ORN) to produce L-citrulline. This is Ornithine carbamoyltransferase (argF) from Methanocaldococcus jannaschii (strain ATCC 43067 / DSM 2661 / JAL-1 / JCM 10045 / NBRC 100440) (Methanococcus jannaschii).